The primary structure comprises 584 residues: 4-hydroxybenzoate decarboxylase subunit C (584 aa).

This sequence belongs to the UbiD family. Component of the decarboxylase complex composed of the subunits B and C (Potential). The subunit D usually found in other organisms seems to be absent.

It catalyses the reaction 4-hydroxybenzoate + H(+) = phenol + CO2. The enzyme activity is enhanced by Mg(2+), Fe(2+), Mn(2+) and Ca(2+). No stimulation is observed with Cu(2+) and Zn(2+). In terms of biological role, catalyzes the reversible decarboxylation of 4-hydroxybenzoate. This Chlamydia pneumoniae (Chlamydophila pneumoniae) protein is 4-hydroxybenzoate decarboxylase subunit C.